The following is a 239-amino-acid chain: Sugar fermentation stimulation protein homolog (239 aa).

It belongs to the SfsA family.

This is Sugar fermentation stimulation protein homolog from Mannheimia succiniciproducens (strain KCTC 0769BP / MBEL55E).